Consider the following 657-residue polypeptide: Glycogen debranching enzyme (657 aa).

D336 (nucleophile) is an active-site residue. E371 functions as the Proton donor in the catalytic mechanism. Residues 460 to 479 form a disordered region; the sequence is ANGEENRDGTNNNYSNNHGK.

This sequence belongs to the glycosyl hydrolase 13 family.

The catalysed reaction is Hydrolysis of (1-&gt;6)-alpha-D-glucosidic linkages to branches with degrees of polymerization of three or four glucose residues in limit dextrin.. Its pathway is glycan degradation; glycogen degradation. Functionally, removes maltotriose and maltotetraose chains that are attached by 1,6-alpha-linkage to the limit dextrin main chain, generating a debranched limit dextrin. This chain is Glycogen debranching enzyme, found in Shigella flexneri serotype 5b (strain 8401).